Here is an 80-residue protein sequence, read N- to C-terminus: Small ribosomal subunit protein bS16 (80 aa).

It belongs to the bacterial ribosomal protein bS16 family.

The protein is Small ribosomal subunit protein bS16 of Laribacter hongkongensis (strain HLHK9).